The following is a 58-amino-acid chain: Small ribosomal subunit protein bS21 (58 aa).

This sequence belongs to the bacterial ribosomal protein bS21 family.

This chain is Small ribosomal subunit protein bS21, found in Picosynechococcus sp. (strain ATCC 27264 / PCC 7002 / PR-6) (Agmenellum quadruplicatum).